A 166-amino-acid polypeptide reads, in one-letter code: Large ribosomal subunit protein uL10 (166 aa).

This sequence belongs to the universal ribosomal protein uL10 family. As to quaternary structure, part of the ribosomal stalk of the 50S ribosomal subunit. The N-terminus interacts with L11 and the large rRNA to form the base of the stalk. The C-terminus forms an elongated spine to which L12 dimers bind in a sequential fashion forming a multimeric L10(L12)X complex.

Functionally, forms part of the ribosomal stalk, playing a central role in the interaction of the ribosome with GTP-bound translation factors. This is Large ribosomal subunit protein uL10 from Shewanella amazonensis (strain ATCC BAA-1098 / SB2B).